The following is a 297-amino-acid chain: Large ribosomal subunit protein uL18 (297 aa).

Belongs to the universal ribosomal protein uL18 family. Component of the large ribosomal subunit (LSU).

It is found in the cytoplasm. The protein localises to the nucleus. Its function is as follows. Component of the ribosome, a large ribonucleoprotein complex responsible for the synthesis of proteins in the cell. The small ribosomal subunit (SSU) binds messenger RNAs (mRNAs) and translates the encoded message by selecting cognate aminoacyl-transfer RNA (tRNA) molecules. The large subunit (LSU) contains the ribosomal catalytic site termed the peptidyl transferase center (PTC), which catalyzes the formation of peptide bonds, thereby polymerizing the amino acids delivered by tRNAs into a polypeptide chain. The nascent polypeptides leave the ribosome through a tunnel in the LSU and interact with protein factors that function in enzymatic processing, targeting, and the membrane insertion of nascent chains at the exit of the ribosomal tunnel. This is Large ribosomal subunit protein uL18 (RpL5) from Aedes aegypti (Yellowfever mosquito).